The following is a 257-amino-acid chain: Type III pantothenate kinase (257 aa).

6-13 serves as a coordination point for ATP; sequence DVGNTNTV. Residues Tyr100 and 107–110 contribute to the substrate site; that span reads GADR. Asp109 functions as the Proton acceptor in the catalytic mechanism. Asp129 is a binding site for K(+). Residue Thr132 coordinates ATP. Thr185 contributes to the substrate binding site.

This sequence belongs to the type III pantothenate kinase family. Homodimer. It depends on NH4(+) as a cofactor. The cofactor is K(+).

The protein resides in the cytoplasm. It carries out the reaction (R)-pantothenate + ATP = (R)-4'-phosphopantothenate + ADP + H(+). It participates in cofactor biosynthesis; coenzyme A biosynthesis; CoA from (R)-pantothenate: step 1/5. Functionally, catalyzes the phosphorylation of pantothenate (Pan), the first step in CoA biosynthesis. This is Type III pantothenate kinase from Desulfatibacillum aliphaticivorans.